A 297-amino-acid chain; its full sequence is Succinate dehydrogenase [ubiquinone] iron-sulfur subunit, mitochondrial (297 aa).

Positions 47–140 (KKFEIYRWNP…SLKVYPLPHM (94 aa)) constitute a 2Fe-2S ferredoxin-type domain. Residues cysteine 100, cysteine 105, cysteine 108, and cysteine 120 each coordinate [2Fe-2S] cluster. Residues 185–215 (DRSKLDGLYECILCACCSTSCPSYWWNAEKY) enclose the 4Fe-4S ferredoxin-type domain. Residues cysteine 195, cysteine 198, and cysteine 201 each contribute to the [4Fe-4S] cluster site. Cysteine 205 contacts [3Fe-4S] cluster. Residue tryptophan 210 coordinates a ubiquinone. Residues cysteine 252 and cysteine 258 each coordinate [3Fe-4S] cluster. Cysteine 262 contributes to the [4Fe-4S] cluster binding site.

The protein belongs to the succinate dehydrogenase/fumarate reductase iron-sulfur protein family. As to quaternary structure, component of complex II composed of four subunits: a flavoprotein (FP), an iron-sulfur protein (IP), and a cytochrome b composed of a large and a small subunit. It depends on [2Fe-2S] cluster as a cofactor. The cofactor is [3Fe-4S] cluster. [4Fe-4S] cluster is required as a cofactor. Most abundant in the adult thorax and low in abdominal tissues.

The protein localises to the mitochondrion inner membrane. It catalyses the reaction a quinone + succinate = fumarate + a quinol. The protein operates within carbohydrate metabolism; tricarboxylic acid cycle; fumarate from succinate (eukaryal route): step 1/1. Iron-sulfur protein (IP) subunit of succinate dehydrogenase (SDH) that is involved in complex II of the mitochondrial electron transport chain and is responsible for transferring electrons from succinate to ubiquinone (coenzyme Q). The protein is Succinate dehydrogenase [ubiquinone] iron-sulfur subunit, mitochondrial (SdhB) of Drosophila melanogaster (Fruit fly).